Consider the following 138-residue polypeptide: Large ribosomal subunit protein uL16 (138 aa).

This sequence belongs to the universal ribosomal protein uL16 family. In terms of assembly, part of the 50S ribosomal subunit.

In terms of biological role, binds 23S rRNA and is also seen to make contacts with the A and possibly P site tRNAs. In Chlamydia pneumoniae (Chlamydophila pneumoniae), this protein is Large ribosomal subunit protein uL16.